Reading from the N-terminus, the 198-residue chain is dITP/XTP pyrophosphatase (198 aa).

9 to 14 (SNNAKK) is a substrate binding site. Asp-41 and Asp-70 together coordinate Mg(2+). Asp-70 acts as the Proton acceptor in catalysis. Substrate contacts are provided by residues Ser-71, 153-156 (FGYD), Lys-176, and 181-182 (HR).

Belongs to the HAM1 NTPase family. Homodimer. Mg(2+) serves as cofactor.

It catalyses the reaction XTP + H2O = XMP + diphosphate + H(+). The enzyme catalyses dITP + H2O = dIMP + diphosphate + H(+). It carries out the reaction ITP + H2O = IMP + diphosphate + H(+). In terms of biological role, pyrophosphatase that catalyzes the hydrolysis of nucleoside triphosphates to their monophosphate derivatives, with a high preference for the non-canonical purine nucleotides XTP (xanthosine triphosphate), dITP (deoxyinosine triphosphate) and ITP. Seems to function as a house-cleaning enzyme that removes non-canonical purine nucleotides from the nucleotide pool, thus preventing their incorporation into DNA/RNA and avoiding chromosomal lesions. The chain is dITP/XTP pyrophosphatase from Aromatoleum aromaticum (strain DSM 19018 / LMG 30748 / EbN1) (Azoarcus sp. (strain EbN1)).